A 345-amino-acid polypeptide reads, in one-letter code: Class I histocompatibility antigen, F10 alpha chain (345 aa).

The first 22 residues, 1-22 (MGPCGALGLGLLLAAVCGAAAP), serve as a signal peptide directing secretion. The tract at residues 23–110 (ELHTLRYIQT…ILQRRYNQTG (88 aa)) is alpha-1. Over 23–301 (ELHTLRYIQT…WEPPQPNLVP (279 aa)) the chain is Extracellular. N-linked (GlcNAc...) asparagine glycans are attached at residues Asn59 and Asn107. Positions 111-201 (GSHTVQWMYG…EYGKAELGRR (91 aa)) are alpha-2. Intrachain disulfides connect Cys121-Cys183 and Cys221-Cys277. The tract at residues 202-292 (ERPEVRVWGK…SLPQPGLYSW (91 aa)) is alpha-3. Residues 204-293 (PEVRVWGKEA…LPQPGLYSWE (90 aa)) enclose the Ig-like C1-type domain. The interval 293 to 301 (EPPQPNLVP) is connecting peptide. A helical membrane pass occupies residues 302–324 (IVAGVAVAIVAIAIMVGVGFIIY). At 325-345 (RRHAGKKGKGYNIAPGSNPAI) the chain is on the cytoplasmic side.

The protein belongs to the MHC class I family. In terms of assembly, heterodimer of an alpha chain and a beta chain (beta-2-microglobulin).

The protein localises to the membrane. In terms of biological role, involved in the presentation of foreign antigens to the immune system. The protein is Class I histocompatibility antigen, F10 alpha chain of Gallus gallus (Chicken).